The primary structure comprises 308 residues: uncharacterized protein (308 aa).

A disordered region spans residues 19–43 (EPQASGAGPAQTPPPVTVPMTPPSK). The segment covering 29 to 43 (QTPPPVTVPMTPPSK) has biased composition (pro residues).

This is an uncharacterized protein from Deinococcus radiodurans (strain ATCC 13939 / DSM 20539 / JCM 16871 / CCUG 27074 / LMG 4051 / NBRC 15346 / NCIMB 9279 / VKM B-1422 / R1).